Here is a 132-residue protein sequence, read N- to C-terminus: Small ribosomal subunit protein uS8c (132 aa).

This sequence belongs to the universal ribosomal protein uS8 family. Part of the 30S ribosomal subunit.

It localises to the plastid. Its subcellular location is the chloroplast. One of the primary rRNA binding proteins, it binds directly to 16S rRNA central domain where it helps coordinate assembly of the platform of the 30S subunit. The polypeptide is Small ribosomal subunit protein uS8c (rps8) (Marchantia polymorpha (Common liverwort)).